A 487-amino-acid chain; its full sequence is Serine/threonine-protein kinase 4 (487 aa).

The residue at position 1 (Met1) is an N-acetylmethionine. At Thr3 the chain carries Phosphothreonine. Residues 30-281 (FDVLEKLGEG…ATQLLQHPFV (252 aa)) enclose the Protein kinase domain. ATP is bound by residues 36 to 44 (LGEGSYGSV) and Lys59. Catalysis depends on Asp149, which acts as the Proton acceptor. Thr183 is modified (phosphothreonine; by autocatalysis). Phosphoserine is present on Ser265. Positions 290-310 (LRDLINEAMDVKLKRQESQQR) form a coiled coil. Residues 303 to 312 (KRQESQQREV) are compositionally biased toward basic and acidic residues. The disordered stretch occupies residues 303-332 (KRQESQQREVDQDDEENSEEDEMDSGTMVR). The span at 313–326 (DQDDEENSEEDEMD) shows a compositional bias: acidic residues. A Phosphoserine modification is found at Ser320. Residues Thr340 and Thr367 each carry the phosphothreonine modification. Thr387 carries the phosphothreonine; by PKB/AKT1 modification. 2 positions are modified to phosphoserine: Ser410 and Ser414. Tyr433 bears the Phosphotyrosine mark. Positions 433-480 (YEFLKSWTVEDLQKRLLALDPMMEQEIEEIRQKYQSKRQPILDAIEAK) constitute an SARAH domain.

It belongs to the protein kinase superfamily. STE Ser/Thr protein kinase family. STE20 subfamily. Homodimer; mediated via the coiled-coil region. Interacts with NORE1, which inhibits autoactivation. Interacts with and stabilizes SAV1. Interacts with RASSF1. Interacts with FOXO3. Interacts with RASSF2 (via SARAH domain). Interacts with AR, PKB/AKT1, TNNI3 and SIRT1. Interacts with DLG5 (via PDZ domain 3). Interacts with MARK3 and SCRIB in the presence of DLG5. The cofactor is Mg(2+). Autophosphorylated on serine and threonine residues. Phosphorylation at Thr-387 by PKB/AKT1, leads to inhibition of its: kinase activity, nuclear translocation and autophosphorylation at Thr-183. It also diminishes its cleavage by caspases and its ability to phosphorylate FOXO3. Post-translationally, proteolytically cleaved by caspase-3 during apoptosis at Asp-326 and Asp-349 resulting in a 37 kDa or a 39 kDa subunit respectively. The 39 kDa subunit is further cleaved into the 37 kDa form. Proteolytic cleavage results in kinase activation and nuclear translocation of the truncated form (MST1/N). It is less likely that cleavage at Asp-349 is a prerequisite for activation as this site is not conserved in the murine ortholog.

The protein localises to the cytoplasm. It is found in the nucleus. It catalyses the reaction L-seryl-[protein] + ATP = O-phospho-L-seryl-[protein] + ADP + H(+). The catalysed reaction is L-threonyl-[protein] + ATP = O-phospho-L-threonyl-[protein] + ADP + H(+). With respect to regulation, inhibited by the C-terminal non-catalytic region. Activated by caspase-cleavage. Full activation also requires homodimerization and autophosphorylation of Thr-183. Activated by RASSF1 which acts by preventing its dephosphorylation. Its function is as follows. Stress-activated, pro-apoptotic kinase which, following caspase-cleavage, enters the nucleus and induces chromatin condensation followed by internucleosomal DNA fragmentation. Key component of the Hippo signaling pathway which plays a pivotal role in organ size control and tumor suppression by restricting proliferation and promoting apoptosis. The core of this pathway is composed of a kinase cascade wherein STK3/MST2 and STK4/MST1, in complex with its regulatory protein SAV1, phosphorylates and activates LATS1/2 in complex with its regulatory protein MOB1, which in turn phosphorylates and inactivates YAP1 oncoprotein and WWTR1/TAZ. Phosphorylation of YAP1 by LATS2 inhibits its translocation into the nucleus to regulate cellular genes important for cell proliferation, cell death, and cell migration. STK3/MST2 and STK4/MST1 are required to repress proliferation of mature hepatocytes, to prevent activation of facultative adult liver stem cells (oval cells), and to inhibit tumor formation. Phosphorylates 'Ser-14' of histone H2B (H2BS14ph) during apoptosis. Phosphorylates FOXO3 upon oxidative stress, which results in its nuclear translocation and cell death initiation. Phosphorylates MOBKL1A, MOBKL1B and RASSF2. Phosphorylates TNNI3 (cardiac Tn-I) and alters its binding affinity to TNNC1 (cardiac Tn-C) and TNNT2 (cardiac Tn-T). Phosphorylates FOXO1 on 'Ser-212' and regulates its activation and stimulates transcription of PMAIP1 in a FOXO1-dependent manner. Phosphorylates SIRT1 and inhibits SIRT1-mediated p53/TP53 deacetylation, thereby promoting p53/TP53 dependent transcription and apoptosis upon DNA damage. Acts as an inhibitor of PKB/AKT1. Phosphorylates AR on 'Ser-650' and suppresses its activity by intersecting with PKB/AKT1 signaling and antagonizing formation of AR-chromatin complexes. The chain is Serine/threonine-protein kinase 4 (STK4) from Chlorocebus aethiops (Green monkey).